Consider the following 483-residue polypeptide: Proline--tRNA ligase (483 aa).

Belongs to the class-II aminoacyl-tRNA synthetase family. ProS type 3 subfamily. In terms of assembly, homodimer.

It localises to the cytoplasm. The catalysed reaction is tRNA(Pro) + L-proline + ATP = L-prolyl-tRNA(Pro) + AMP + diphosphate. Catalyzes the attachment of proline to tRNA(Pro) in a two-step reaction: proline is first activated by ATP to form Pro-AMP and then transferred to the acceptor end of tRNA(Pro). The polypeptide is Proline--tRNA ligase (Mycoplasma pneumoniae (strain ATCC 29342 / M129 / Subtype 1) (Mycoplasmoides pneumoniae)).